The chain runs to 333 residues: Fatty acid hydroxylase domain-containing protein 2 (333 aa).

6 consecutive transmembrane segments (helical) span residues 29 to 49, 77 to 97, 134 to 154, 168 to 188, 215 to 235, and 237 to 257; these read FILG…TWHL, ILFF…FNGL, TVLF…YPFL, FHWF…LFYY, VISL…PVIV, and PLVM…ALII. The Fatty acid hydroxylase domain maps to 176-299; it reads AIFTLIEEVL…LGVLDHLHGT (124 aa).

Belongs to the sterol desaturase family. Down-regulated in primary acute myeloid leukemia (AML) patients.

It localises to the cytoplasm. The protein localises to the membrane. In terms of biological role, promotes megakaryocyte differentiation by enhancing ERK phosphorylation and up-regulating RUNX1 expression. The polypeptide is Fatty acid hydroxylase domain-containing protein 2 (FAXDC2) (Homo sapiens (Human)).